The chain runs to 352 residues: DNA polymerase IV (352 aa).

The UmuC domain maps to 4 to 185; the sequence is IIHVDMDCFY…LPLEKIPGVG (182 aa). Mg(2+) contacts are provided by Asp-8 and Asp-103. The active site involves Glu-104.

The protein belongs to the DNA polymerase type-Y family. Monomer. Mg(2+) is required as a cofactor.

The protein resides in the cytoplasm. It carries out the reaction DNA(n) + a 2'-deoxyribonucleoside 5'-triphosphate = DNA(n+1) + diphosphate. In terms of biological role, poorly processive, error-prone DNA polymerase involved in untargeted mutagenesis. Copies undamaged DNA at stalled replication forks, which arise in vivo from mismatched or misaligned primer ends. These misaligned primers can be extended by PolIV. Exhibits no 3'-5' exonuclease (proofreading) activity. May be involved in translesional synthesis, in conjunction with the beta clamp from PolIII. This chain is DNA polymerase IV, found in Pectobacterium atrosepticum (strain SCRI 1043 / ATCC BAA-672) (Erwinia carotovora subsp. atroseptica).